The sequence spans 313 residues: Porphobilinogen deaminase (313 aa).

S-(dipyrrolylmethanemethyl)cysteine is present on C242.

Belongs to the HMBS family. In terms of assembly, monomer. The cofactor is dipyrromethane.

It carries out the reaction 4 porphobilinogen + H2O = hydroxymethylbilane + 4 NH4(+). Its pathway is porphyrin-containing compound metabolism; protoporphyrin-IX biosynthesis; coproporphyrinogen-III from 5-aminolevulinate: step 2/4. Functionally, tetrapolymerization of the monopyrrole PBG into the hydroxymethylbilane pre-uroporphyrinogen in several discrete steps. This is Porphobilinogen deaminase from Pseudomonas putida (strain W619).